Consider the following 162-residue polypeptide: MGFVELNLTGIIQLLNFLILLFVLYKFLYKPFLQIADKRREKIQSDLASAEKELKEAQEMKKQAHDALESARKSADGIISEARQKSEEIINQAKVKAREEAEKVLNSARNEIEREKKQALQEIEKRAGEIAVTLALKILQGVLDEKAKREYLINILNKEKEK.

Residues 8-28 (LTGIIQLLNFLILLFVLYKFL) traverse the membrane as a helical segment.

The protein belongs to the ATPase B chain family. As to quaternary structure, F-type ATPases have 2 components, F(1) - the catalytic core - and F(0) - the membrane proton channel. F(1) has five subunits: alpha(3), beta(3), gamma(1), delta(1), epsilon(1). F(0) has three main subunits: a(1), b(2) and c(10-14). The alpha and beta chains form an alternating ring which encloses part of the gamma chain. F(1) is attached to F(0) by a central stalk formed by the gamma and epsilon chains, while a peripheral stalk is formed by the delta and b chains.

The protein resides in the cell inner membrane. In terms of biological role, f(1)F(0) ATP synthase produces ATP from ADP in the presence of a proton or sodium gradient. F-type ATPases consist of two structural domains, F(1) containing the extramembraneous catalytic core and F(0) containing the membrane proton channel, linked together by a central stalk and a peripheral stalk. During catalysis, ATP synthesis in the catalytic domain of F(1) is coupled via a rotary mechanism of the central stalk subunits to proton translocation. Component of the F(0) channel, it forms part of the peripheral stalk, linking F(1) to F(0). The sequence is that of ATP synthase subunit b from Pseudothermotoga lettingae (strain ATCC BAA-301 / DSM 14385 / NBRC 107922 / TMO) (Thermotoga lettingae).